The following is a 70-amino-acid chain: Eglin C (70 aa).

The protein belongs to the protease inhibitor I13 (potato type I serine protease inhibitor) family.

In terms of biological role, inhibits both elastase and cathepsin G. In Hirudo medicinalis (Medicinal leech), this protein is Eglin C.